The sequence spans 367 residues: tRNA/tmRNA (uracil-C(5))-methyltransferase (367 aa).

Residues Q190, Y218, N223, E239, and D299 each contribute to the S-adenosyl-L-methionine site. C324 acts as the Nucleophile in catalysis. E358 serves as the catalytic Proton acceptor.

This sequence belongs to the class I-like SAM-binding methyltransferase superfamily. RNA M5U methyltransferase family. TrmA subfamily.

It catalyses the reaction uridine(54) in tRNA + S-adenosyl-L-methionine = 5-methyluridine(54) in tRNA + S-adenosyl-L-homocysteine + H(+). The enzyme catalyses uridine(341) in tmRNA + S-adenosyl-L-methionine = 5-methyluridine(341) in tmRNA + S-adenosyl-L-homocysteine + H(+). Dual-specificity methyltransferase that catalyzes the formation of 5-methyluridine at position 54 (m5U54) in all tRNAs, and that of position 341 (m5U341) in tmRNA (transfer-mRNA). In Yersinia pestis bv. Antiqua (strain Antiqua), this protein is tRNA/tmRNA (uracil-C(5))-methyltransferase.